Consider the following 149-residue polypeptide: Transcriptional repressor NrdR (149 aa).

The segment at 3–34 (CPFCCAVDTKVIDSRLVGEGSSVRRRRQCVVC) is a zinc-finger region. The ATP-cone domain maps to 49 to 139 (PRVVKSNDVR…VYRSFEDIRE (91 aa)).

It belongs to the NrdR family. Zn(2+) is required as a cofactor.

Functionally, negatively regulates transcription of bacterial ribonucleotide reductase nrd genes and operons by binding to NrdR-boxes. The polypeptide is Transcriptional repressor NrdR (Erwinia tasmaniensis (strain DSM 17950 / CFBP 7177 / CIP 109463 / NCPPB 4357 / Et1/99)).